We begin with the raw amino-acid sequence, 727 residues long: Glycerol-3-phosphate dehydrogenase, mitochondrial (727 aa).

The N-terminal 42 residues, methionine 1–alanine 42, are a transit peptide targeting the mitochondrion. Aspartate 71–glutamate 99 provides a ligand contact to FAD. A Phosphotyrosine modification is found at tyrosine 601. 2 EF-hand domains span residues proline 623–glutamine 658 and methionine 659–glycine 694. Residues aspartate 672, asparagine 674, asparagine 676, glutamine 678, and glutamate 683 each coordinate Ca(2+).

It belongs to the FAD-dependent glycerol-3-phosphate dehydrogenase family. It depends on FAD as a cofactor.

Its subcellular location is the mitochondrion. The enzyme catalyses a quinone + sn-glycerol 3-phosphate = dihydroxyacetone phosphate + a quinol. It participates in polyol metabolism; glycerol degradation via glycerol kinase pathway; glycerone phosphate from sn-glycerol 3-phosphate (anaerobic route): step 1/1. With respect to regulation, calcium-binding enhance the activity of the enzyme. Calcium-responsive mitochondrial glycerol-3-phosphate dehydrogenase which seems to be a key component of the pancreatic beta-cell glucose-sensing device. The protein is Glycerol-3-phosphate dehydrogenase, mitochondrial of Rattus norvegicus (Rat).